Here is a 481-residue protein sequence, read N- to C-terminus: MKVTTEQLPKRIVALEIEPDAATIEKELNKAAQRIASKVAIPGFRKGKAPRFIVENYYGKAAILEEATDEIINVAFRAALEQENIKPVAQASLEKLEPEPFRFRILVPVEPEVILPDYKAITVDLTEEPVTDATLEVALDQAREKHVVLSAPEGEPEAAEGDQLTATVQTLVDGVPLHKLDEEDDDDDDDDDDDDDDDDDDDDDDDDDDDDDDDDDDDDDDDDDDDDDDDDDEGEPTTLIMEERRIVPELYAGLKGIKAGETREISAHLPADHPDARVADKDVVFKVTVSEIQNRQLPAWEELPGLEEFEGDLDAYKADLMERLVKNSGDHHRRNVLNQYLEEVVAATSFDVPDALIAERAHELLHEQVESLARYGINMEQYLQIVGKTHDEAVQELLPRGEESLKSSLVVRKIVEAEGLSVDESEINAEIERILNDFPDAQRGPARRRLEKELRPQVAGSLLDKKLQDRLVELATGNAAA.

The region spanning 161-298 (GDQLTATVQT…VSEIQNRQLP (138 aa)) is the PPIase FKBP-type domain. Positions 173–245 (DGVPLHKLDE…PTTLIMEERR (73 aa)) are disordered. Acidic residues predominate over residues 182-235 (EEDDDDDDDDDDDDDDDDDDDDDDDDDDDDDDDDDDDDDDDDDDDDDDDDDEGE).

Belongs to the FKBP-type PPIase family. Tig subfamily.

The protein resides in the cytoplasm. The catalysed reaction is [protein]-peptidylproline (omega=180) = [protein]-peptidylproline (omega=0). Its function is as follows. Involved in protein export. Acts as a chaperone by maintaining the newly synthesized protein in an open conformation. Functions as a peptidyl-prolyl cis-trans isomerase. This is Trigger factor from Herpetosiphon aurantiacus (strain ATCC 23779 / DSM 785 / 114-95).